The following is a 210-amino-acid chain: Orotate phosphoribosyltransferase (210 aa).

K26 serves as a coordination point for 5-phospho-alpha-D-ribose 1-diphosphate. 34–35 contributes to the orotate binding site; it reads FF. 5-phospho-alpha-D-ribose 1-diphosphate-binding positions include 72–73, R98, K99, K102, H104, and 123–131; these read YK and DDVITAGTA. Positions 127 and 155 each coordinate orotate.

The protein belongs to the purine/pyrimidine phosphoribosyltransferase family. PyrE subfamily. Homodimer. The cofactor is Mg(2+).

The catalysed reaction is orotidine 5'-phosphate + diphosphate = orotate + 5-phospho-alpha-D-ribose 1-diphosphate. Its pathway is pyrimidine metabolism; UMP biosynthesis via de novo pathway; UMP from orotate: step 1/2. In terms of biological role, catalyzes the transfer of a ribosyl phosphate group from 5-phosphoribose 1-diphosphate to orotate, leading to the formation of orotidine monophosphate (OMP). This is Orotate phosphoribosyltransferase from Legionella pneumophila (strain Paris).